The primary structure comprises 122 residues: MASETPRVDPTEISNVNAPVFRIIAQIKSQPTESQLILQSPTISSKNGSEVEMITLNNIRVSMNKTFEIDSWYEFVCRNNDDGELGFLILDAVLCKFKENEDLSLNGVVALQRLCKKYPEIY.

The protein belongs to the replication factor A protein 3 family. Component of the heterotrimeric canonical replication protein A complex (RPA). In terms of processing, the N-terminus is blocked.

It localises to the nucleus. Functionally, as part of the replication protein A (RPA/RP-A), a single-stranded DNA-binding heterotrimeric complex, may play an essential role in DNA replication, recombination and repair. Binds and stabilizes single-stranded DNA intermediates, preventing complementary DNA reannealing and recruiting different proteins involved in DNA metabolism. Stimulates the activity of a cognate strand exchange protein (SEP1). The polypeptide is Replication factor A protein 3 (RFA3) (Saccharomyces cerevisiae (strain ATCC 204508 / S288c) (Baker's yeast)).